The primary structure comprises 550 residues: Amino acid transporter AVT1D (550 aa).

The segment covering 1–16 (MKLDEEFLHDRDHSFL) has biased composition (basic and acidic residues). A disordered region spans residues 1–99 (MKLDEEFLHD…FMPQSSSRRL (99 aa)). Residues 84-99 (TPPSVSFMPQSSSRRL) are compositionally biased toward polar residues. 11 consecutive transmembrane segments (helical) span residues 164–184 (SVLNGTNVLCGLGLITMPYAI), 189–209 (WLGLPILLFFGVITCYTGVLM), 236–256 (FIISILLYVELYAACVEYIIM), 264–286 (LFPNVSLSIASGISLDSPQIFAI), 308–328 (SVGGVLASILLGICLFWVGAV), 345–365 (LPVTIGIFGFGYSGHSVFPNI), 375–395 (FPLVLVICFSFCTVLYIAVAV), 424–444 (VWTAVITPMTKYALTITPIVM), 459–479 (GVSILFRTMLVTSTLVVALSV), 481–501 (FFAIVAALIGSFLAMLVALIF), and 521–541 (LCIFIIVFGVVSGCCGTYSAI).

The protein belongs to the amino acid/polyamine transporter 2 family. Amino acid/auxin permease (AAAP) (TC 2.A.18.5) subfamily.

It localises to the membrane. The protein is Amino acid transporter AVT1D of Arabidopsis thaliana (Mouse-ear cress).